The primary structure comprises 258 residues: Imidazole glycerol phosphate synthase subunit HisF (258 aa).

Active-site residues include aspartate 11 and aspartate 130.

Belongs to the HisA/HisF family. Heterodimer of HisH and HisF.

The protein resides in the cytoplasm. It carries out the reaction 5-[(5-phospho-1-deoxy-D-ribulos-1-ylimino)methylamino]-1-(5-phospho-beta-D-ribosyl)imidazole-4-carboxamide + L-glutamine = D-erythro-1-(imidazol-4-yl)glycerol 3-phosphate + 5-amino-1-(5-phospho-beta-D-ribosyl)imidazole-4-carboxamide + L-glutamate + H(+). It functions in the pathway amino-acid biosynthesis; L-histidine biosynthesis; L-histidine from 5-phospho-alpha-D-ribose 1-diphosphate: step 5/9. IGPS catalyzes the conversion of PRFAR and glutamine to IGP, AICAR and glutamate. The HisF subunit catalyzes the cyclization activity that produces IGP and AICAR from PRFAR using the ammonia provided by the HisH subunit. The sequence is that of Imidazole glycerol phosphate synthase subunit HisF from Yersinia pestis (strain Pestoides F).